A 463-amino-acid polypeptide reads, in one-letter code: Increased DNA methylation 3 (463 aa).

Over residues 169 to 182 the composition is skewed to basic and acidic residues; the sequence is NLDESRETEQDCSR. Disordered regions lie at residues 169–199 and 300–347; these read NLDESRETEQDCSRNGDATANGVVTNEDYNS and RRFK…TTGT. A compositionally biased stretch (polar residues) spans 184–199; the sequence is GDATANGVVTNEDYNS. Residues 300–310 show a composition bias toward basic residues; it reads RRFKNSSKKAT.

As to quaternary structure, interacts with MBD7 (via C-terminus), IDM1 and IDM2. Part of a complex made of MBD7, IDM1, IDM2 and IDM3.

It localises to the nucleus. Functionally, acts as an anti-silencing factor that prevents DNA hypermethylation and gene repression. This is Increased DNA methylation 3 from Arabidopsis thaliana (Mouse-ear cress).